Reading from the N-terminus, the 924-residue chain is Exocyst complex component 2 (924 aa).

The IPT/TIG domain maps to 8–93 (PLVTGISPNE…GTSTVSFKLL (86 aa)). Positions 240-260 (QKLENVLNRASNTADTLFQEV) form a coiled coil. 3 positions are modified to phosphoserine: serine 431, serine 432, and serine 435. Threonine 440 bears the Phosphothreonine mark. Lysine 454 is modified (N6-acetyllysine). Serine 888 carries the phosphoserine modification.

The protein belongs to the SEC5 family. As to quaternary structure, the exocyst complex is composed of EXOC1, EXOC2, EXOC3, EXOC4, EXOC5, EXOC6, EXOC7 and EXOC8. Interacts with EXOC3L1. Interacts with GNEFR/DELGEF; this interaction occurs only in the presence of magnesium or manganese and is stimulated by dCTP or GTP. Interacts with RALA and RALB. Interacts with ARL13B; regulates ARL13B localization to the cilium membrane. As to expression, widely expressed with highest levels in brain and placenta.

It is found in the midbody. The protein resides in the midbody ring. In terms of biological role, component of the exocyst complex involved in the docking of exocytic vesicles with fusion sites on the plasma membrane. This chain is Exocyst complex component 2 (EXOC2), found in Homo sapiens (Human).